The primary structure comprises 618 residues: Chaperone protein HtpG (618 aa).

The tract at residues Met1–Arg331 is a; substrate-binding. The interval Glu332 to Lys541 is b. Residues Met542–Ile618 are c.

The protein belongs to the heat shock protein 90 family. As to quaternary structure, homodimer.

The protein resides in the cytoplasm. In terms of biological role, molecular chaperone. Has ATPase activity. This Wolinella succinogenes (strain ATCC 29543 / DSM 1740 / CCUG 13145 / JCM 31913 / LMG 7466 / NCTC 11488 / FDC 602W) (Vibrio succinogenes) protein is Chaperone protein HtpG.